The following is a 156-amino-acid chain: Endoribonuclease YbeY (156 aa).

Zn(2+) is bound by residues His-122, His-126, and His-132.

Belongs to the endoribonuclease YbeY family. The cofactor is Zn(2+).

The protein localises to the cytoplasm. In terms of biological role, single strand-specific metallo-endoribonuclease involved in late-stage 70S ribosome quality control and in maturation of the 3' terminus of the 16S rRNA. In Bacillus cereus (strain ATCC 14579 / DSM 31 / CCUG 7414 / JCM 2152 / NBRC 15305 / NCIMB 9373 / NCTC 2599 / NRRL B-3711), this protein is Endoribonuclease YbeY.